The chain runs to 458 residues: Kelch repeat and BTB domain-containing protein 13 (458 aa).

The BTB domain occupies 7–74 (TLVQVWVGGQ…LRGDRPALAA (68 aa)). 5 Kelch repeats span residues 159–209 (AVST…TLGN), 210–258 (KLYI…GFDG), 259–305 (RLYA…QACG), 307–350 (LFVC…VAHR), and 352–400 (SLYV…VVRG).

Component of the BCR(KBTBD13) E3 ubiquitin ligase complex, at least composed of CUL3 and KBTBD13 and RBX1. Interacts with CUL3. Post-translationally, autoubiquitinated. Expressed in skeletal muscle.

Its subcellular location is the cytoplasm. It functions in the pathway protein modification; protein ubiquitination. Its function is as follows. Substrate-specific adapter of a BCR (BTB-CUL3-RBX1) E3 ubiquitin ligase complex. This chain is Kelch repeat and BTB domain-containing protein 13 (KBTBD13), found in Homo sapiens (Human).